A 427-amino-acid chain; its full sequence is MSVSFEKKETNRGVLTFTISQEQIKPELDRVFNSVKKTINVPGFRKGHLPRPVFNQKFGEEALYQDALNNLLPNAYEAAVKEAGIEVVAQPKIDVVSMEKGQDWTISAEVVTKPEVKLGAYKDLEVSVEVSKEVTDEDVDARIERERNNLAELVLKEGPAAEGDTVVIDFVGSVDGVEFDGGKGDNFSLGLGSGQFIPGFEDQLVGHKAGETVDVVVTFPEDYQAADLAGKEAKFVTTIHEVKEKEVPALDDELAKDIDEEVETLDELKEKYRKELAEGKEAAYKDAVESAAIDLAVENAEIVELPEEMVHEEVHRSVNEFLGNMQRQGISPDMYFQITGTTQEDLHKQHEADAEARTKTNLVIEAIAKAEGFEASAEEIEAEISSLANDYNMEADRVRQLLSEDMLKHDITIKKAVEVITSTAKVK.

A PPIase FKBP-type domain is found at 163 to 248; sequence GDTVVIDFVG…IHEVKEKEVP (86 aa).

It belongs to the FKBP-type PPIase family. Tig subfamily.

The protein resides in the cytoplasm. The catalysed reaction is [protein]-peptidylproline (omega=180) = [protein]-peptidylproline (omega=0). Its function is as follows. Involved in protein export. Acts as a chaperone by maintaining the newly synthesized protein in an open conformation. Functions as a peptidyl-prolyl cis-trans isomerase. The chain is Trigger factor from Streptococcus gordonii (strain Challis / ATCC 35105 / BCRC 15272 / CH1 / DL1 / V288).